The primary structure comprises 507 residues: Cytochrome P450 monooxygenase helB2 (507 aa).

An N-terminal signal peptide occupies residues 1–22 (MALPIILCLAVILWTSWRLLDA). Cysteine 436 contributes to the heme binding site.

It belongs to the cytochrome P450 family. Heme is required as a cofactor.

The protein operates within mycotoxin biosynthesis. Functionally, cytochrome P450 monooxygenase; part of the gene cluster that mediates the biosynthesis of helvolic acid, an antibacterial nortriterpenoid. Protostadienol synthase helA cyclizes (3S)-oxidosqualene to (17Z)-protosta-17(20),24-dien-3-beta-ol (protostadienol). The synthesis of protostadienol is followed by several steps of monooxygenation, dehydrogenation, and acyl transfer to yield the final helvolic acid. Following the cyclization to the tetracyclic protostadienol by helA, cytochrome P450 monooxygenases helB1-mediated and helB2-mediated oxidation at C-4 and C-16, acyltransferase helD2-dependent acetylation of 16-OH, oxidation of C-21 by cytochrome P450 monooxygenase helB4, and short chain dehydrogenase helC-dependent oxidative decarboxylation yield the fusidane skeleton. This intermediate is further modified in three additional steps mediated by the cytochrome P450 monooxygenase helB3, the acyltransferase helD1, and the 3-ketosteroid 1-dehydrogenase helE to give helvolic acid. Compared with the late stages in the biosynthesis of helvolic acid, enzymes involved in the early stage modifications act in a relatively strict order. The hydroxylation of C-16 by helB1 and subsequent acetylation by helD2 should occur before the helB3-mediated oxidation of C-21. C-4 demethylation in fusidane-type antibiotics proceeds in an unusual manner though it is also achieved by oxidative decarboxylation. The methyl group at C-4 beta position is oxidized by helB1 and subsequently removed by the short chain dehydrogenase helC. In Aspergillus fumigatus (strain ATCC MYA-4609 / CBS 101355 / FGSC A1100 / Af293) (Neosartorya fumigata), this protein is Cytochrome P450 monooxygenase helB2.